The primary structure comprises 254 residues: Cobalt transport protein CbiM (254 aa).

An N-terminal signal peptide occupies residues M1–A31. 6 consecutive transmembrane segments (helical) span residues G37–V57, L74–V94, L106–F126, A128–I148, W169–L189, and I212–F232.

Belongs to the CbiM family. As to quaternary structure, forms an energy-coupling factor (ECF) transporter complex composed of an ATP-binding protein (A component, CbiO), a transmembrane protein (T component, CbiQ) and 2 possible substrate-capture proteins (S components, CbiM and CbiN) of unknown stoichimetry.

The protein resides in the cell inner membrane. The protein operates within cofactor biosynthesis; adenosylcobalamin biosynthesis. Part of the energy-coupling factor (ECF) transporter complex CbiMNOQ involved in cobalt import. This chain is Cobalt transport protein CbiM, found in Chlorobium limicola (strain DSM 245 / NBRC 103803 / 6330).